Reading from the N-terminus, the 510-residue chain is Facilitated glucose transporter protein 1 (510 aa).

Positions 1 to 29 are disordered; it reads MSEKSRSDTSATASLSDSSKSPSSYSTPG. At 1–46 the chain is on the cytoplasmic side; that stretch reads MSEKSRSDTSATASLSDSSKSPSSYSTPGTTTQKIIFPDGKLTKCL. Positions 8–29 are enriched in low complexity; the sequence is DTSATASLSDSSKSPSSYSTPG. A helical membrane pass occupies residues 47 to 67; that stretch reads AFSAFVITLASFQFGYHIGCV. At 68–100 the chain is on the extracellular side; that stretch reads NAPGGLITEWIIGSHKDLFDKELSRENADLAWS. A helical transmembrane segment spans residues 101–121; sequence VAVSVFAVGGMIGGLSSGWLA. Topologically, residues 122-127 are cytoplasmic; it reads DKVGRR. A helical transmembrane segment spans residues 128–146; that stretch reads GALFYNNLLALAAAALMGL. Topologically, residues 147–160 are extracellular; sequence AKSVGAYPMVILGR. Residues 161 to 181 form a helical membrane-spanning segment; that stretch reads LIIGLNCGFSSALVPMFLTEI. The Cytoplasmic portion of the chain corresponds to 182 to 195; the sequence is SPNNLRGMLGSLHQ. Gln195 contributes to the D-glucose binding site. The chain crosses the membrane as a helical span at residues 196–216; the sequence is LLVTIAILVSQIFGLPHLLGT. The Extracellular segment spans residues 217–219; it reads GDR. A helical transmembrane segment spans residues 220-240; sequence WPLIFAFTVVPAVLQLALLML. Over 241–299 the chain is Cytoplasmic; it reads CPESPKYTMAVRGQRNEAESALKKLRDTEDVSTEIEAMQEEATAAGVQEKPKMGDMFKG. The chain crosses the membrane as a helical span at residues 300–320; that stretch reads ALLWPMSIAIMMMLAQQLSGI. Residues 315 to 316, Asn321, and Asn352 contribute to the D-glucose site; that span reads QQ. Residues 321 to 341 lie on the Extracellular side of the membrane; that stretch reads NVAMFYSTVIFRGAGLTGNEP. The chain crosses the membrane as a helical span at residues 342–362; the sequence is FYATIGMGAVNVIMTLISVWL. The Cytoplasmic portion of the chain corresponds to 363 to 373; the sequence is VDHPKFGRRSL. Residues 374-394 form a helical membrane-spanning segment; sequence LLAGLTGMFVSTLLLVGALTI. Residues 395 to 409 lie on the Extracellular side of the membrane; that stretch reads QNSGGDKWASYSAIG. A helical membrane pass occupies residues 410–430; that stretch reads FVLLFVISFATGPGAIPWFFV. Position 427 (Trp427) interacts with D-glucose. The Cytoplasmic segment spans residues 431–445; sequence SEIFDSSARGNANSI. Residues 446–464 form a helical membrane-spanning segment; that stretch reads AVMVNWAANLLVGLTFLPI. Over 465–470 the chain is Extracellular; it reads NNLMQQ. Residues 471–491 traverse the membrane as a helical segment; sequence YSFFIFSGFLAFFIFYTWKFV. At 492 to 510 the chain is on the cytoplasmic side; the sequence is PETKGKSIEQIQAEFEKRK.

The protein belongs to the major facilitator superfamily. Sugar transporter (TC 2.A.1.1) family. Glucose transporter subfamily. In terms of tissue distribution, isoform a is expressed in pharyngeal muscle and intestinal cells in both embryos and adults (at protein level).

It localises to the cell membrane. Its subcellular location is the basolateral cell membrane. Functionally, facilitative glucose transporter that plays a role in glucose metabolism and regulation of longevity. May also play a role in lipid metabolism. Glucose transport activity of isoform a is competitively inhibited by mannose, galactose and fructose, suggesting ability to transport also other hexose sugars. The protein is Facilitated glucose transporter protein 1 of Caenorhabditis elegans.